The primary structure comprises 119 residues: Holo-[acyl-carrier-protein] synthase (119 aa).

Mg(2+)-binding residues include Asp8 and Glu59.

It belongs to the P-Pant transferase superfamily. AcpS family. Requires Mg(2+) as cofactor.

The protein resides in the cytoplasm. The enzyme catalyses apo-[ACP] + CoA = holo-[ACP] + adenosine 3',5'-bisphosphate + H(+). Transfers the 4'-phosphopantetheine moiety from coenzyme A to a Ser of acyl-carrier-protein. This chain is Holo-[acyl-carrier-protein] synthase, found in Lactococcus lactis subsp. lactis (strain IL1403) (Streptococcus lactis).